A 271-amino-acid chain; its full sequence is Replication-associated protein A (271 aa).

The region spanning 11 to 114 (LHRNANTFLT…PLAVFERGTF (104 aa)) is the CRESS-DNA virus Rep endonuclease domain. The RCR-1 motif lies at 18–21 (FLTY). Glutamate 52, histidine 60, and histidine 62 together coordinate a divalent metal cation. The short motif at 60 to 62 (HLH) is the RCR-2 element. The active-site For DNA cleavage activity is the tyrosine 100. An RCR-3 motif is present at residues 100 to 103 (YILK). Residue glutamate 104 coordinates a divalent metal cation. The interval 174 to 186 (SANKLFPDIQEEF) is oligomerization. The binding to RBR1 stretch occupies residues 197–201 (LLCNE). Residues 220 to 229 (MLLQPTCYTV) form a transactivation region. Residues 244–264 (SQQMKDQESRASTSSVQQGQG) show a composition bias toward polar residues. The segment at 244-271 (SQQMKDQESRASTSSVQQGQGNLLGPEV) is disordered.

It belongs to the geminiviridae Rep protein family. Homooligomer. Interacts with host retinoblastoma-related protein 1 (RBR1), and may thereby deregulate the host cell cycle. Part of the C- and V-complexes which are RepA-Rep-DNA complexes involved in the c-sense and v-sense transcription. The cofactor is Mg(2+). Requires Mn(2+) as cofactor.

It is found in the host nucleus. It localises to the host cytoplasm. Implicated in enhancement of V-sense gene expression. Acts a an inhibitor of C-sense gene transcription. This chain is Replication-associated protein A, found in Avena sativa (Oat).